A 194-amino-acid chain; its full sequence is uncharacterized protein (194 aa).

The region spanning 20 to 185 is the Exonuclease domain; sequence RIFIDTETTG…ADCRMTLGII (166 aa).

This is an uncharacterized protein from Escherichia coli (Bacteriophage 186).